The primary structure comprises 760 residues: MMDQARSAFSNLFGGEPLSYTRFSLARQVDGDNSHVEMKLAVDEEENADNNTKANVTKPKRCSGSICYGTIAVIVFFLIGFMIGYLGYCKGVEPKTECERLAGTESPVREEPGEDFPAARRLYWDDLKRKLSEKLDSTDFTGTIKLLNENSYVPREAGSQKDENLALYVENQFREFKLSKVWRDQHFVKIQVKDSAQNSVIIVDKNGRLVYLVENPGGYVAYSKAATVTGKLVHANFGTKKDFEDLYTPVNGSIVIVRAGKITFAEKVANAESLNAIGVLIYMDQTKFPIVNAELSFFGHAHLGTGDPYTPGFPSFNHTQFPPSRSSGLPNIPVQTISRAAAEKLFGNMEGDCPSDWKTDSTCRMVTSESKNVKLTVSNVLKEIKILNIFGVIKGFVEPDHYVVVGAQRDAWGPGAAKSGVGTALLLKLAQMFSDMVLKDGFQPSRSIIFASWSAGDFGSVGATEWLEGYLSSLHLKAFTYINLDKAVLGTSNFKVSASPLLYTLIEKTMQNVKHPVTGQFLYQDSNWASKVEKLTLDNAAFPFLAYSGIPAVSFCFCEDTDYPYLGTTMDTYKELIERIPELNKVARAAAEVAGQFVIKLTHDVELNLDYERYNSQLLSFVRDLNQYRADIKEMGLSLQWLYSARGDFFRATSRLTTDFGNAEKTDRFVMKKLNDRVMRVEYHFLSPYVSPKESPFRHVFWGSGSHTLPALLENLKLRKQNNGAFNETLFRNQLALATWTIQGAANALSGDVWDIDNEF.

The Cytoplasmic portion of the chain corresponds to 1–67 (MMDQARSAFS…KPKRCSGSIC (67 aa)). The segment at 1–67 (MMDQARSAFS…KPKRCSGSIC (67 aa)) is mediates interaction with SH3BP4. Ser10 and Ser19 each carry phosphoserine. Tyr20 is subject to Phosphotyrosine. An Endocytosis signal motif is present at residues 20 to 23 (YTRF). Thr21 is modified (phosphothreonine). Ser24 carries the phosphoserine modification. A Stop-transfer sequence motif is present at residues 58-61 (KPKR). Residues Cys62 and Cys67 are each lipidated (S-palmitoyl cysteine). Residues 68-88 (YGTIAVIVFFLIGFMIGYLGY) traverse the membrane as a helical; Signal-anchor for type II membrane protein segment. Topologically, residues 89–760 (CKGVEPKTEC…GDVWDIDNEF (672 aa)) are extracellular. The O-linked (GalNAc...) threonine glycan is linked to Thr104. Residues 223-313 (SKAATVTGKL…GTGDPYTPGF (91 aa)) form the PA domain. Residues Asn251 and Asn317 are each glycosylated (N-linked (GlcNAc...) asparagine). The interval 569–760 (TMDTYKELIE…GDVWDIDNEF (192 aa)) is ligand-binding. The Cell attachment site; required for binding to transferrin signature appears at 646 to 648 (RGD). Asn727 carries an N-linked (GlcNAc...) asparagine glycan.

The protein belongs to the peptidase M28 family. M28B subfamily. Homodimer; disulfide-linked. Binds one transferrin or HFE molecule per subunit. Binds the HLA class II histocompatibility antigen, DR1. Interacts with SH3BP3. Interacts with STEAP3; facilitates TFRC endocytosis in erythroid precursor cells. Interacts with GRM2. As to quaternary structure, (Microbial infection) Interacts with Guanarito, Junin and Machupo arenavirus glycoprotein complex. In terms of assembly, (Microbial infection) Interacts with rabies virus protein G. (Microbial infection) Interacts with SARS-CoV-2 spike protein S. Stearoylated by ZDHHC6 which inhibits TFRC-mediated activation of the JNK pathway and promotes mitochondrial fragmentation. Stearoylation does not affect iron uptake. Post-translationally, N- and O-glycosylated, phosphorylated and palmitoylated. The serum form is only glycosylated. In terms of processing, proteolytically cleaved on Arg-100 to produce the soluble serum form (sTfR). Palmitoylated on both Cys-62 and Cys-67. Cys-62 seems to be the major site of palmitoylation.

The protein resides in the cell membrane. It localises to the melanosome. Its subcellular location is the secreted. In terms of biological role, cellular uptake of iron occurs via receptor-mediated endocytosis of ligand-occupied transferrin receptor into specialized endosomes. Endosomal acidification leads to iron release. The apotransferrin-receptor complex is then recycled to the cell surface with a return to neutral pH and the concomitant loss of affinity of apotransferrin for its receptor. Transferrin receptor is necessary for development of erythrocytes and the nervous system. A second ligand, the hereditary hemochromatosis protein HFE, competes for binding with transferrin for an overlapping C-terminal binding site. Positively regulates T and B cell proliferation through iron uptake. Acts as a lipid sensor that regulates mitochondrial fusion by regulating activation of the JNK pathway. When dietary levels of stearate (C18:0) are low, promotes activation of the JNK pathway, resulting in HUWE1-mediated ubiquitination and subsequent degradation of the mitofusin MFN2 and inhibition of mitochondrial fusion. When dietary levels of stearate (C18:0) are high, TFRC stearoylation inhibits activation of the JNK pathway and thus degradation of the mitofusin MFN2. Mediates uptake of NICOL1 into fibroblasts where it may regulate extracellular matrix production. (Microbial infection) Acts as a receptor for new-world arenaviruses: Guanarito, Junin and Machupo virus. Functionally, (Microbial infection) Acts as a host entry factor for rabies virus that hijacks the endocytosis of TFRC to enter cells. Its function is as follows. (Microbial infection) Acts as a host entry factor for SARS-CoV, MERS-CoV and SARS-CoV-2 viruses that hijack the endocytosis of TFRC to enter cells. This Homo sapiens (Human) protein is Transferrin receptor protein 1 (TFRC).